Consider the following 99-residue polypeptide: Large ribosomal subunit protein uL23 (99 aa).

This sequence belongs to the universal ribosomal protein uL23 family. Part of the 50S ribosomal subunit. Contacts protein L29, and trigger factor when it is bound to the ribosome.

One of the early assembly proteins it binds 23S rRNA. One of the proteins that surrounds the polypeptide exit tunnel on the outside of the ribosome. Forms the main docking site for trigger factor binding to the ribosome. The polypeptide is Large ribosomal subunit protein uL23 (Rhodopseudomonas palustris (strain HaA2)).